The chain runs to 40 residues: Photosystem II reaction center protein J (40 aa).

A helical membrane pass occupies residues 8-28; sequence IPLWIIGTVAGILVIGLVGVF.

It belongs to the PsbJ family. PSII is composed of 1 copy each of membrane proteins PsbA, PsbB, PsbC, PsbD, PsbE, PsbF, PsbH, PsbI, PsbJ, PsbK, PsbL, PsbM, PsbT, PsbX, PsbY, PsbZ, Psb30/Ycf12, at least 3 peripheral proteins of the oxygen-evolving complex and a large number of cofactors. It forms dimeric complexes.

It is found in the plastid. The protein resides in the chloroplast thylakoid membrane. In terms of biological role, one of the components of the core complex of photosystem II (PSII). PSII is a light-driven water:plastoquinone oxidoreductase that uses light energy to abstract electrons from H(2)O, generating O(2) and a proton gradient subsequently used for ATP formation. It consists of a core antenna complex that captures photons, and an electron transfer chain that converts photonic excitation into a charge separation. This Helianthus annuus (Common sunflower) protein is Photosystem II reaction center protein J.